The sequence spans 138 residues: ATP synthase epsilon chain (138 aa).

The protein belongs to the ATPase epsilon chain family. In terms of assembly, F-type ATPases have 2 components, CF(1) - the catalytic core - and CF(0) - the membrane proton channel. CF(1) has five subunits: alpha(3), beta(3), gamma(1), delta(1), epsilon(1). CF(0) has three main subunits: a, b and c.

Its subcellular location is the cell inner membrane. In terms of biological role, produces ATP from ADP in the presence of a proton gradient across the membrane. This chain is ATP synthase epsilon chain, found in Polaromonas naphthalenivorans (strain CJ2).